Reading from the N-terminus, the 511-residue chain is 2-isopropylmalate synthase (511 aa).

The Pyruvate carboxyltransferase domain occupies 4 to 266; it reads IDIFDTTLRD…ETGIQLQEIK (263 aa). Positions 13, 201, 203, and 237 each coordinate Mn(2+). Positions 392–511 are regulatory domain; the sequence is ELKMVQVQYG…IKESLRAHPV (120 aa).

This sequence belongs to the alpha-IPM synthase/homocitrate synthase family. LeuA type 1 subfamily. As to quaternary structure, homodimer. Requires Mn(2+) as cofactor.

The protein localises to the cytoplasm. It carries out the reaction 3-methyl-2-oxobutanoate + acetyl-CoA + H2O = (2S)-2-isopropylmalate + CoA + H(+). The protein operates within amino-acid biosynthesis; L-leucine biosynthesis; L-leucine from 3-methyl-2-oxobutanoate: step 1/4. Its function is as follows. Catalyzes the condensation of the acetyl group of acetyl-CoA with 3-methyl-2-oxobutanoate (2-ketoisovalerate) to form 3-carboxy-3-hydroxy-4-methylpentanoate (2-isopropylmalate). This chain is 2-isopropylmalate synthase, found in Lysinibacillus sphaericus (strain C3-41).